Reading from the N-terminus, the 313-residue chain is Beta-ribofuranosylphenol 5'-phosphate synthase (313 aa).

It belongs to the beta-RFA-P synthase family. In terms of assembly, homodimer.

The enzyme catalyses 5-phospho-alpha-D-ribose 1-diphosphate + 4-hydroxybenzoate + H(+) = 4-(beta-D-ribofuranosyl)phenol 5'-phosphate + CO2 + diphosphate. It catalyses the reaction 4-aminobenzoate + 5-phospho-alpha-D-ribose 1-diphosphate + H(+) = 4-(beta-D-ribofuranosyl)aminobenzene 5'-phosphate + CO2 + diphosphate. The protein operates within cofactor biosynthesis; 5,6,7,8-tetrahydromethanopterin biosynthesis. Catalyzes the condensation of 4-hydroxybenzoate (HB) with 5-phospho-alpha-D-ribose 1-diphosphate (PRPP) to produce beta-ribofuranosylphenol 5'-phosphate (beta-RFH-P). Also catalyzes the condensation of 4-aminobenzoate (pABA) with PRPP to produce beta-ribofuranosylaminobenzene 5'-phosphate (beta-RFA-P). The polypeptide is Beta-ribofuranosylphenol 5'-phosphate synthase (Archaeoglobus fulgidus (strain ATCC 49558 / DSM 4304 / JCM 9628 / NBRC 100126 / VC-16)).